The sequence spans 329 residues: CDP-diacylglycerol--glycerol-3-phosphate 3-phosphatidyltransferase 1, chloroplastic (329 aa).

A chloroplast-targeting transit peptide spans 1-38 (MAFLKTLNPLLRRSPTPIPNPRSLLSLDAFLAASSPTA). 4 consecutive transmembrane segments (helical) span residues 150–170 (PVIG…TLAL), 190–210 (VFGS…VAIA), 217–237 (LHPG…GGAV), and 300–320 (ITVL…GYGI).

It belongs to the CDP-alcohol phosphatidyltransferase class-I family. Mn(2+) serves as cofactor.

The protein resides in the plastid. It is found in the chloroplast membrane. The enzyme catalyses a CDP-1,2-diacyl-sn-glycerol + sn-glycerol 3-phosphate = a 1,2-diacyl-sn-glycero-3-phospho-(1'-sn-glycero-3'-phosphate) + CMP + H(+). It participates in phospholipid metabolism; phosphatidylglycerol biosynthesis; phosphatidylglycerol from CDP-diacylglycerol: step 1/2. Its function is as follows. Catalyzes the committed step to the synthesis of the acidic phospholipids. Transfers specifically a phosphatidyl group from CDP-diacylglycerol to glycerol-3-phosphate to form phosphatidylglycerophosphate. The protein is CDP-diacylglycerol--glycerol-3-phosphate 3-phosphatidyltransferase 1, chloroplastic of Oryza sativa subsp. japonica (Rice).